The chain runs to 934 residues: Serine/threonine-protein kinase KIPK1 (934 aa).

Disordered stretches follow at residues 20–40 (LPKH…KDLV), 70–113 (RLMS…RFVG), 189–227 (PLMP…FGLQ), 305–343 (SSSA…RPKQ), 395–438 (SIDD…SCNV), and 466–493 (EKET…DYSR). Polar residues-rich tracts occupy residues 82–94 (SASA…TSPS) and 212–227 (NPIS…FGLQ). Positions 395-421 (SIDDNPPSYTSSHNPKICTDSLSSVSN) are enriched in polar residues. Residues 538–879 (FNLLKKLGCG…SVEIKRHPFF (342 aa)) form the Protein kinase domain. ATP-binding positions include 544–552 (LGCGDIGTV) and Lys-567. Asp-663 acts as the Proton acceptor in catalysis. The disordered stretch occupies residues 738–773 (SSNQQQGRKPKRGDHLSKTQQHLSRSLPQLVAEPTE). The span at 755 to 764 (KTQQHLSRSL) shows a compositional bias: polar residues.

This sequence belongs to the protein kinase superfamily. Ser/Thr protein kinase family. In terms of assembly, interacts with KCBP. Interacts with PERK8, PERK9, PERK10 and PERK13. In terms of processing, autophosphorylated. As to expression, expressed in roots, cauline leaves, flowers and siliques.

Its subcellular location is the cytoplasm. It is found in the nucleus. It carries out the reaction L-seryl-[protein] + ATP = O-phospho-L-seryl-[protein] + ADP + H(+). The catalysed reaction is L-threonyl-[protein] + ATP = O-phospho-L-threonyl-[protein] + ADP + H(+). Its function is as follows. Could be involved in the negative regulation of root growth. The chain is Serine/threonine-protein kinase KIPK1 from Arabidopsis thaliana (Mouse-ear cress).